We begin with the raw amino-acid sequence, 368 residues long: Molybdenum import ATP-binding protein ModC (368 aa).

An ABC transporter domain is found at 1-231 (MKGLQVAFKQ…QAMRPWQSFS (231 aa)). 33–40 (GRSGAGKT) is an ATP binding site. One can recognise a Mop domain in the interval 292 to 363 (KTSIRNIIEA…IKGVSVTQRD (72 aa)).

The protein belongs to the ABC transporter superfamily. Molybdate importer (TC 3.A.1.8) family. The complex is composed of two ATP-binding proteins (ModC), two transmembrane proteins (ModB) and a solute-binding protein (ModA).

The protein localises to the cell inner membrane. It carries out the reaction molybdate(out) + ATP + H2O = molybdate(in) + ADP + phosphate + H(+). In terms of biological role, part of the ABC transporter complex ModABC involved in molybdenum import. Responsible for energy coupling to the transport system. This is Molybdenum import ATP-binding protein ModC from Vibrio vulnificus (strain YJ016).